A 107-amino-acid polypeptide reads, in one-letter code: Ig kappa chain V-VI region NQ2-17.4.1 (107 aa).

The segment at 1–23 (QIVLTQSPAIMSASPGQKVTMTC) is framework-1. A disulfide bridge links cysteine 23 with cysteine 87. The complementarity-determining-1 stretch occupies residues 24-33 (SASSSVSYMH). The framework-2 stretch occupies residues 34-48 (WYQQKSGTSPKRWIY). Residues 49–55 (DTSKLAS) form a complementarity-determining-2 region. Residues 56–87 (GVPARFSGSGSATSYSLTITSMQAEDAATYYC) are framework-3. Residues 88–96 (QQWSSNPLT) form a complementarity-determining-3 region. A framework-4 region spans residues 97–106 (FGAGTKLELK).

In terms of biological role, anti-2-phenyl oxazolone (PHOX) Antibody. The sequence is that of Ig kappa chain V-VI region NQ2-17.4.1 from Mus musculus (Mouse).